Reading from the N-terminus, the 233-residue chain is ATP-dependent Clp protease proteolytic subunit 1 (233 aa).

S136 acts as the Nucleophile in catalysis. The active site involves H161.

Belongs to the peptidase S14 family. As to quaternary structure, fourteen ClpP subunits assemble into 2 heptameric rings which stack back to back to give a disk-like structure with a central cavity, resembling the structure of eukaryotic proteasomes.

It localises to the cytoplasm. The catalysed reaction is Hydrolysis of proteins to small peptides in the presence of ATP and magnesium. alpha-casein is the usual test substrate. In the absence of ATP, only oligopeptides shorter than five residues are hydrolyzed (such as succinyl-Leu-Tyr-|-NHMec, and Leu-Tyr-Leu-|-Tyr-Trp, in which cleavage of the -Tyr-|-Leu- and -Tyr-|-Trp bonds also occurs).. In terms of biological role, cleaves peptides in various proteins in a process that requires ATP hydrolysis. Has a chymotrypsin-like activity. Plays a major role in the degradation of misfolded proteins. This Bifidobacterium longum (strain NCC 2705) protein is ATP-dependent Clp protease proteolytic subunit 1.